The following is a 309-amino-acid chain: Ribosomal RNA small subunit methyltransferase H (309 aa).

Residues 32–34 (AGH), Asp-52, Phe-79, Asp-100, and Gln-107 each bind S-adenosyl-L-methionine.

It belongs to the methyltransferase superfamily. RsmH family.

The protein resides in the cytoplasm. It carries out the reaction cytidine(1402) in 16S rRNA + S-adenosyl-L-methionine = N(4)-methylcytidine(1402) in 16S rRNA + S-adenosyl-L-homocysteine + H(+). Its function is as follows. Specifically methylates the N4 position of cytidine in position 1402 (C1402) of 16S rRNA. In Mycoplasma capricolum subsp. capricolum (strain California kid / ATCC 27343 / NCTC 10154), this protein is Ribosomal RNA small subunit methyltransferase H.